We begin with the raw amino-acid sequence, 267 residues long: RWD domain-containing protein 3 (267 aa).

The region spanning 7–114 (EELSVLAAIF…LWIQQNLRHI (108 aa)) is the RWD domain. Interaction with UBE2I/UBC9 regions lie at residues 13–15 (AAI) and 100–102 (VHE).

Isoform 1 and isoform 2 interact with UBE2I/UBC9. Isoform 1 shows a greater interaction with NFKBIA and HIF1A as compared to isoform 2. Isoform 2 interacts with NCOA2 and NR3C1. Isoform 1 and isoform 2 are expressed in glioma tumors (at protein level). Expressed in a wide number of tissues with highest expression in cerebellum, pituitary, heart, kidney, liver, stomach, pancreas, prostate and spleen. Low levels in thalamus, spinal cord, esophagus, thymus, lung and peripheral blood leukocytes. A higher level expression seen in pituitary tumors as compared to the pituitary gland.

The protein localises to the nucleus. The protein resides in the cytoplasm. Functionally, enhancer of SUMO conjugation. Via its interaction with UBE2I/UBC9, increases SUMO conjugation to proteins by promoting the binding of E1 and E2 enzymes, thioester linkage between SUMO and UBE2I/UBC9 and transfer of SUMO to specific target proteins which include HIF1A, PIAS, NFKBIA, NR3C1 and TOP1. Isoform 1 and isoform 2 positively regulate the NF-kappa-B signaling pathway by enhancing the sumoylation of NF-kappa-B inhibitor alpha (NFKBIA), promoting its stabilization which consequently leads to an increased inhibition of NF-kappa-B transcriptional activity. Isoform 1 and isoform 2 negatively regulate the hypoxia-inducible factor-1 alpha (HIF1A) signaling pathway by increasing the sumoylation of HIF1A, promoting its stabilization, transcriptional activity and the expression of its target gene VEGFA during hypoxia. Isoform 2 promotes the sumoylation and transcriptional activity of the glucocorticoid receptor NR3C1 and enhances the interaction of SUMO1 and NR3C1 with UBE2I/UBC9. Has no effect on ubiquitination. This Homo sapiens (Human) protein is RWD domain-containing protein 3 (RWDD3).